The chain runs to 1744 residues: Complement C4-A (1744 aa).

A signal peptide spans 1–19 (MRLLWGLIWASSFFTLSLQ). Cysteine 68 and cysteine 97 are disulfide-bonded. The N-linked (GlcNAc...) asparagine glycan is linked to asparagine 226. Cysteine 635 and cysteine 669 form a disulfide bridge. A propeptide spanning residues 676-679 (RKKR) is cleaved from the precursor. Disulfide bonds link cysteine 702–cysteine 728, cysteine 703–cysteine 735, and cysteine 716–cysteine 736. The 35-residue stretch at 702 to 736 (CCQDGVTRLPMMRSCEQRAARVQQPDCREPFLSCC) folds into the Anaphylatoxin-like domain. Asparagine 862 carries N-linked (GlcNAc...) asparagine glycosylation. Position 918 is a phosphoserine; by FAM20C (serine 918). Positions 1010-1013 (CGEQ) form a cross-link, isoglutamyl cysteine thioester (Cys-Gln). An O-linked (GalNAc...) threonine glycan is attached at threonine 1244. Asparagine 1328 carries an N-linked (GlcNAc...) (complex) asparagine glycan. Asparagine 1391 carries an N-linked (GlcNAc...) asparagine glycan. Sulfotyrosine occurs at positions 1417, 1420, and 1422. The propeptide occupies 1447 to 1453 (RRNRRRR). 5 disulfides stabilise this stretch: cysteine 1471-cysteine 1535, cysteine 1583-cysteine 1588, cysteine 1595-cysteine 1673, cysteine 1618-cysteine 1742, and cysteine 1718-cysteine 1727. The region spanning 1595–1742 (CPRQRRALER…FLQEYGTQGC (148 aa)) is the NTR domain.

As to quaternary structure, complement circulates in blood as a disulfide-linked trimer of an alpha, beta and gamma chain. Complement C4b is composed of complement C4b-A, complement C4 beta and complement C4 gamma chains that are associated via disulfide bonds. Non-enzymatic component of the C3 convertase, also named C4bC2b, composed of the serine protease complement C2b (C2), as well as complement C4b. Non-enzymatic component of the C5 convertase, also named C4bC2bC3b, composed of the serine protease complement C2b (C2), complement C3b, as well as complement C4b. In terms of processing, prior to secretion, the single-chain precursor is enzymatically cleaved by plasminogen (PLG) to yield non-identical chains alpha, beta and gamma. During activation of the complement systems, the alpha chain is cleaved into C4a and C4b by different proteases depending on the complement pathway: C4b stays linked to the beta and gamma chains, while C4a is released in the plasma. The alpha chain is cleaved by C1S to generate C4a and C4b following activation by the classical complement system. The alpha chain is cleaved to generate C4a and C4b by MASP2 following activation by the lectin complement system. The alpha chain is cleaved by GZMK to generate C4a and C4b following activation by the GZMK complement system. Further degradation of C4b by C1 into the inactive fragments C4c and C4d blocks the generation of C3 convertase. The proteolytic cleavages often are incomplete so that many structural forms can be found in plasma. Upon activation, the internal thioester bond reacts with carbohydrate antigens on the target surface to form amide or ester bonds, leading to covalent association with the surface of pathogens. Post-translationally, ser-1236 of complement C4b interacts with complement C3b via a thioester linkage. In terms of processing, N- and O-glycosylated. O-glycosylated with a core 1 or possibly core 8 glycan. In terms of tissue distribution, complement component C4 is expressed at highest levels in the liver, at moderate levels in the adrenal cortex, adrenal medulla, thyroid gland, and the kidney, and at lowest levels in the heart, ovary, small intestine, thymus, pancreas and spleen. The extra-hepatic sites of expression may be important for the local protection and inflammatory response.

The protein resides in the secreted. It localises to the synapse. Its subcellular location is the cell projection. It is found in the axon. The protein localises to the dendrite. The protein resides in the cell surface. Specifically inhibited by nanobody hC4Nb8, inhibiting the classical complement pathway. Specifically inhibited by NbB5, NbE11 and NbH9 nanobodies, and to a lesser extent by NbH11 and NbE3 nanobodies. Its function is as follows. Precursor of non-enzymatic components of the classical, lectin and GZMK complement pathways, which consist in a cascade of proteins that leads to phagocytosis and breakdown of pathogens and signaling that strengthens the adaptive immune system. In terms of biological role, non-enzymatic component of C3 and C5 convertases. Generated following cleavage by complement proteases (C1S, MASP2 or GZMK, depending on the complement pathway), it covalently attaches to the surface of pathogens, where it acts as an opsonin that marks the surface of antigens for removal. It then recruits the serine protease complement C2b to form the C3 and C5 convertases, which cleave and activate C3 and C5, respectively, the next components of the complement pathways. Complement C4b-A isotype is responsible for effective binding to form amide bonds with immune aggregates or protein antigens, while complement C4b-B isotype catalyzes the transacylation of the thioester carbonyl group to form ester bonds with carbohydrate antigens. Putative humoral mediator released following cleavage by complement proteases (C1S, MASP2 or GZMK, depending on the complement pathway). While it is strongly similar to anaphylatoxins, its role is unclear. Was reported to act as a mediator of local inflammatory process; however these effects were probably due to contamination with C3a and/C5a anaphylatoxins in biological assays. This Homo sapiens (Human) protein is Complement C4-A.